Consider the following 318-residue polypeptide: Acetyl-coenzyme A carboxylase carboxyl transferase subunit alpha (318 aa).

Residues 39–292 (LSDKAERQLR…GAAIAETLPG (254 aa)) enclose the CoA carboxyltransferase C-terminal domain.

The protein belongs to the AccA family. In terms of assembly, acetyl-CoA carboxylase is a heterohexamer composed of biotin carboxyl carrier protein (AccB), biotin carboxylase (AccC) and two subunits each of ACCase subunit alpha (AccA) and ACCase subunit beta (AccD).

It localises to the cytoplasm. It carries out the reaction N(6)-carboxybiotinyl-L-lysyl-[protein] + acetyl-CoA = N(6)-biotinyl-L-lysyl-[protein] + malonyl-CoA. It functions in the pathway lipid metabolism; malonyl-CoA biosynthesis; malonyl-CoA from acetyl-CoA: step 1/1. In terms of biological role, component of the acetyl coenzyme A carboxylase (ACC) complex. First, biotin carboxylase catalyzes the carboxylation of biotin on its carrier protein (BCCP) and then the CO(2) group is transferred by the carboxyltransferase to acetyl-CoA to form malonyl-CoA. The polypeptide is Acetyl-coenzyme A carboxylase carboxyl transferase subunit alpha (Acidiphilium cryptum (strain JF-5)).